Consider the following 174-residue polypeptide: uncharacterized protein (174 aa).

It to E.coli HemX C-terminal region.

This is an uncharacterized protein from Haemophilus influenzae (strain ATCC 51907 / DSM 11121 / KW20 / Rd).